Consider the following 270-residue polypeptide: Putative pyruvate, phosphate dikinase regulatory protein (270 aa).

151–158 contributes to the ADP binding site; sequence GVSRTSKT.

The protein belongs to the pyruvate, phosphate/water dikinase regulatory protein family. PDRP subfamily.

It carries out the reaction N(tele)-phospho-L-histidyl/L-threonyl-[pyruvate, phosphate dikinase] + ADP = N(tele)-phospho-L-histidyl/O-phospho-L-threonyl-[pyruvate, phosphate dikinase] + AMP + H(+). The enzyme catalyses N(tele)-phospho-L-histidyl/O-phospho-L-threonyl-[pyruvate, phosphate dikinase] + phosphate + H(+) = N(tele)-phospho-L-histidyl/L-threonyl-[pyruvate, phosphate dikinase] + diphosphate. Its function is as follows. Bifunctional serine/threonine kinase and phosphorylase involved in the regulation of the pyruvate, phosphate dikinase (PPDK) by catalyzing its phosphorylation/dephosphorylation. The protein is Putative pyruvate, phosphate dikinase regulatory protein (yqfL) of Bacillus subtilis (strain 168).